The following is a 396-amino-acid chain: Acetate kinase (396 aa).

Position 7 (asparagine 7) interacts with Mg(2+). Position 14 (lysine 14) interacts with ATP. Arginine 88 is a binding site for substrate. Catalysis depends on aspartate 145, which acts as the Proton donor/acceptor. Residues 205 to 209 (HLGNG), 279 to 281 (DFR), and 327 to 331 (GIGEN) contribute to the ATP site. A Mg(2+)-binding site is contributed by glutamate 381.

This sequence belongs to the acetokinase family. As to quaternary structure, homodimer. It depends on Mg(2+) as a cofactor. Mn(2+) serves as cofactor.

The protein localises to the cytoplasm. The catalysed reaction is acetate + ATP = acetyl phosphate + ADP. It participates in metabolic intermediate biosynthesis; acetyl-CoA biosynthesis; acetyl-CoA from acetate: step 1/2. Functionally, catalyzes the formation of acetyl phosphate from acetate and ATP. Can also catalyze the reverse reaction. The sequence is that of Acetate kinase from Campylobacter jejuni subsp. jejuni serotype O:23/36 (strain 81-176).